Reading from the N-terminus, the 366-residue chain is Flagellar P-ring protein (366 aa).

The signal sequence occupies residues 1 to 20 (MVIKFLSALILLLVTTAVQA).

Belongs to the FlgI family. As to quaternary structure, the basal body constitutes a major portion of the flagellar organelle and consists of four rings (L,P,S, and M) mounted on a central rod.

It is found in the periplasm. The protein localises to the bacterial flagellum basal body. Its function is as follows. Assembles around the rod to form the L-ring and probably protects the motor/basal body from shearing forces during rotation. In Escherichia coli O6:H1 (strain CFT073 / ATCC 700928 / UPEC), this protein is Flagellar P-ring protein.